Here is a 221-residue protein sequence, read N- to C-terminus: Probable septum site-determining protein MinC (221 aa).

It belongs to the MinC family. In terms of assembly, interacts with MinD and FtsZ.

Cell division inhibitor that blocks the formation of polar Z ring septums. Rapidly oscillates between the poles of the cell to destabilize FtsZ filaments that have formed before they mature into polar Z rings. Prevents FtsZ polymerization. In Shewanella halifaxensis (strain HAW-EB4), this protein is Probable septum site-determining protein MinC.